A 562-amino-acid polypeptide reads, in one-letter code: Sulfite reductase [NADPH] hemoprotein beta-component (562 aa).

Positions 426, 432, 471, and 475 each coordinate [4Fe-4S] cluster. A siroheme-binding site is contributed by C475.

Belongs to the nitrite and sulfite reductase 4Fe-4S domain family. Alpha(8)-beta(8). The alpha component is a flavoprotein, the beta component is a hemoprotein. It depends on siroheme as a cofactor. Requires [4Fe-4S] cluster as cofactor.

It catalyses the reaction hydrogen sulfide + 3 NADP(+) + 3 H2O = sulfite + 3 NADPH + 4 H(+). The protein operates within sulfur metabolism; hydrogen sulfide biosynthesis; hydrogen sulfide from sulfite (NADPH route): step 1/1. Its function is as follows. Component of the sulfite reductase complex that catalyzes the 6-electron reduction of sulfite to sulfide. This is one of several activities required for the biosynthesis of L-cysteine from sulfate. The protein is Sulfite reductase [NADPH] hemoprotein beta-component of Shewanella denitrificans (strain OS217 / ATCC BAA-1090 / DSM 15013).